The primary structure comprises 70 residues: Large ribosomal subunit protein bL31 (70 aa).

Zn(2+) is bound by residues cysteine 16, cysteine 18, cysteine 37, and cysteine 40.

The protein belongs to the bacterial ribosomal protein bL31 family. Type A subfamily. Part of the 50S ribosomal subunit. Zn(2+) is required as a cofactor.

Functionally, binds the 23S rRNA. The polypeptide is Large ribosomal subunit protein bL31 (Shewanella amazonensis (strain ATCC BAA-1098 / SB2B)).